Reading from the N-terminus, the 2457-residue chain is Large tegument protein deneddylase (2457 aa).

The deubiquitination activity stretch occupies residues 1–234; that stretch reads MALPASLAGF…SDLHGSKIIL (234 aa). In terms of domain architecture, Peptidase C76 spans 13 to 224; it reads EGTASTNQAD…IMSHYKVISF (212 aa). Catalysis depends on residues Cys-33, Asp-163, and His-165. Disordered regions lie at residues 281–350, 2064–2131, 2164–2360, and 2387–2407; these read EEWT…LPSV, ITEG…PIIP, GHSG…PQPQ, and GMSD…GVTH. Residues 293–302 show a composition bias toward basic and acidic residues; the sequence is SGRTPPEKMT. The span at 314–334 shows a compositional bias: acidic residues; sequence TMDDDVIDLTGDDDMEDESEG. A compositionally biased stretch (basic and acidic residues) spans 2080 to 2091; sequence TQDHMEEPDNKQ. The segment covering 2115 to 2131 has biased composition (pro residues); sequence SPSPSPPVLTPIKPIIP. Over residues 2173–2186 the composition is skewed to polar residues; the sequence is HIQSSTPGPAQNTR. Residues 2387–2398 are compositionally biased toward basic and acidic residues; that stretch reads GMSDDKNPEPCV.

It belongs to the herpesviridae large tegument protein family. As to quaternary structure, interacts with host CUL1 and CUL4A; these interactions inhibit the E3 ligase activity of cullins. Interacts with inner tegument protein. Interacts with capsid vertex specific component CVC2. Interacts with the major capsid protein/MCP.

The protein localises to the virion tegument. Its subcellular location is the host cytoplasm. It localises to the host nucleus. It carries out the reaction Thiol-dependent hydrolysis of ester, thioester, amide, peptide and isopeptide bonds formed by the C-terminal Gly of ubiquitin (a 76-residue protein attached to proteins as an intracellular targeting signal).. Its function is as follows. Large tegument protein that plays multiple roles in the viral cycle. During viral entry, remains associated with the capsid while most of the tegument is detached and participates in the capsid transport toward the host nucleus. Plays a role in the routing of the capsid at the nuclear pore complex and subsequent uncoating. Within the host nucleus, acts as a deneddylase and promotes the degradation of nuclear CRLs (cullin-RING ubiquitin ligases) and thereby stabilizes nuclear CRL substrates, while cytoplasmic CRLs remain unaffected. These modifications prevent host cell cycle S-phase progression and create a favorable environment allowing efficient viral genome replication. Participates later in the secondary envelopment of capsids. Indeed, plays a linker role for the association of the outer viral tegument to the capsids together with the inner tegument protein. In Apodemus sylvaticus (European woodmouse), this protein is Large tegument protein deneddylase.